Here is a 612-residue protein sequence, read N- to C-terminus: Phosphoenolpyruvate carboxykinase [GTP] (612 aa).

Substrate contacts are provided by residues arginine 82 and 221 to 223 (YGG). Residues lysine 230 and histidine 250 each contribute to the Mn(2+) site. A substrate-binding site is contributed by serine 272. 273-278 (ACGKTN) serves as a coordination point for GTP. Residue cysteine 274 is part of the active site. Aspartate 297 provides a ligand contact to Mn(2+). 388–390 (NSR) lines the substrate pocket. Residues arginine 390, arginine 421, and 516–519 (FGEN) contribute to the GTP site.

This sequence belongs to the phosphoenolpyruvate carboxykinase [GTP] family. In terms of assembly, monomer. Mn(2+) is required as a cofactor.

Its subcellular location is the cytoplasm. It catalyses the reaction oxaloacetate + GTP = phosphoenolpyruvate + GDP + CO2. It functions in the pathway carbohydrate biosynthesis; gluconeogenesis. Its function is as follows. Catalyzes the conversion of oxaloacetate (OAA) to phosphoenolpyruvate (PEP), the rate-limiting step in the metabolic pathway that produces glucose from lactate and other precursors derived from the citric acid cycle. This chain is Phosphoenolpyruvate carboxykinase [GTP], found in Corynebacterium efficiens (strain DSM 44549 / YS-314 / AJ 12310 / JCM 11189 / NBRC 100395).